Reading from the N-terminus, the 27-residue chain is Augerpeptide hhe6.2 (27 aa).

Disulfide bonds link cysteine 4-cysteine 13, cysteine 8-cysteine 20, and cysteine 12-cysteine 27.

In terms of tissue distribution, expressed by the venom duct.

The protein localises to the secreted. This chain is Augerpeptide hhe6.2, found in Hastula hectica (Sea snail).